The chain runs to 250 residues: Triosephosphate isomerase (250 aa).

Residue 9-11 coordinates substrate; it reads NWK. The active-site Electrophile is the His-100. Glu-169 serves as the catalytic Proton acceptor. Residues Gly-175, Ser-208, and 229–230 each bind substrate; that span reads GG.

Belongs to the triosephosphate isomerase family. Homodimer.

It is found in the cytoplasm. The catalysed reaction is D-glyceraldehyde 3-phosphate = dihydroxyacetone phosphate. The protein operates within carbohydrate biosynthesis; gluconeogenesis. It participates in carbohydrate degradation; glycolysis; D-glyceraldehyde 3-phosphate from glycerone phosphate: step 1/1. Its function is as follows. Involved in the gluconeogenesis. Catalyzes stereospecifically the conversion of dihydroxyacetone phosphate (DHAP) to D-glyceraldehyde-3-phosphate (G3P). In Synechococcus sp. (strain JA-2-3B'a(2-13)) (Cyanobacteria bacterium Yellowstone B-Prime), this protein is Triosephosphate isomerase.